The primary structure comprises 468 residues: Elongation factor 1-alpha (468 aa).

The region spanning 6-244 is the tr-type G domain; the sequence is KPHINIVVIG…DNIPLPARPS (239 aa). The interval 15–22 is G1; sequence GHVDSGKS. Residue 15 to 22 coordinates GTP; that stretch reads GHVDSGKS. A G2 region spans residues 71–75; it reads GITID. Positions 92–95 are G3; sequence DAPG. GTP is bound by residues 92–96 and 154–157; these read DAPGH and NKID. Positions 154–157 are G4; that stretch reads NKID. Residues 195 to 197 are G5; that stretch reads SGW. 2 positions are modified to 5-glutamyl glycerylphosphorylethanolamine: glutamate 303 and glutamate 376.

This sequence belongs to the TRAFAC class translation factor GTPase superfamily. Classic translation factor GTPase family. EF-Tu/EF-1A subfamily.

It localises to the cytoplasm. Its function is as follows. This protein promotes the GTP-dependent binding of aminoacyl-tRNA to the A-site of ribosomes during protein biosynthesis. The polypeptide is Elongation factor 1-alpha (Hydra vulgaris (Hydra)).